The chain runs to 173 residues: Bifunctional protein PyrR (173 aa).

A PRPP-binding motif is present at residues 93 to 105; sequence VILVDDVLYTGRT.

This sequence belongs to the purine/pyrimidine phosphoribosyltransferase family. PyrR subfamily. Homodimer and homohexamer; in equilibrium.

It catalyses the reaction UMP + diphosphate = 5-phospho-alpha-D-ribose 1-diphosphate + uracil. Functionally, regulates transcriptional attenuation of the pyrimidine nucleotide (pyr) operon by binding in a uridine-dependent manner to specific sites on pyr mRNA. This disrupts an antiterminator hairpin in the RNA and favors formation of a downstream transcription terminator, leading to a reduced expression of downstream genes. Also displays a weak uracil phosphoribosyltransferase activity which is not physiologically significant. This Streptococcus pneumoniae (strain 70585) protein is Bifunctional protein PyrR.